Consider the following 348-residue polypeptide: Sulfate/thiosulfate import ATP-binding protein CysA (348 aa).

An ABC transporter domain is found at 3 to 237 (IEVRNIVKEF…PASAFVHGFI (235 aa)). 35 to 42 (GPSGSGKT) serves as a coordination point for ATP.

The protein belongs to the ABC transporter superfamily. Sulfate/tungstate importer (TC 3.A.1.6) family. The complex is composed of two ATP-binding proteins (CysA), two transmembrane proteins (CysT and CysW) and a solute-binding protein (CysP).

The protein resides in the cell inner membrane. The enzyme catalyses sulfate(out) + ATP + H2O = sulfate(in) + ADP + phosphate + H(+). The catalysed reaction is thiosulfate(out) + ATP + H2O = thiosulfate(in) + ADP + phosphate + H(+). Functionally, part of the ABC transporter complex CysAWTP involved in sulfate/thiosulfate import. Responsible for energy coupling to the transport system. This Rhodopseudomonas palustris (strain ATCC BAA-98 / CGA009) protein is Sulfate/thiosulfate import ATP-binding protein CysA.